The sequence spans 130 residues: Small ribosomal subunit protein uS8 (130 aa).

The protein belongs to the universal ribosomal protein uS8 family. As to quaternary structure, part of the 30S ribosomal subunit. Contacts proteins S5 and S12.

Its function is as follows. One of the primary rRNA binding proteins, it binds directly to 16S rRNA central domain where it helps coordinate assembly of the platform of the 30S subunit. The polypeptide is Small ribosomal subunit protein uS8 (Pectobacterium carotovorum subsp. carotovorum (strain PC1)).